The following is a 184-amino-acid chain: Endoribonuclease YbeY (184 aa).

Composition is skewed to acidic residues over residues M1–P11 and D19–D29. A disordered region spans residues M1 to L37. H146, H150, and H156 together coordinate Zn(2+).

It belongs to the endoribonuclease YbeY family. The cofactor is Zn(2+).

It localises to the cytoplasm. Functionally, single strand-specific metallo-endoribonuclease involved in late-stage 70S ribosome quality control and in maturation of the 3' terminus of the 16S rRNA. The sequence is that of Endoribonuclease YbeY from Burkholderia mallei (strain ATCC 23344).